Reading from the N-terminus, the 206-residue chain is MIEIIGILILGYLLGSIPFALLVGKWGHGIDIRQHGSGNLGTTNTFRVLGKKAGIIVLIGDLGKGAVASLVPILLASELHPLFAGLAAVVGHIYPVFARFKGGKAVATSGGMLLVTSPILFLVLLISFLTTLRLSRMVSLSSIVSASIGIVAAITIGIVEQDWIVPTFFTILALFVIFKHRENISRIRQGTESKIGMFAKDKKDTD.

Transmembrane regions (helical) follow at residues 4–24 (IIGILILGYLLGSIPFALLVG), 55–75 (IIVLIGDLGKGAVASLVPILL), 78–98 (ELHPLFAGLAAVVGHIYPVFA), 112–132 (MLLVTSPILFLVLLISFLTTL), 137–157 (MVSLSSIVSASIGIVAAITIG), and 158–178 (IVEQDWIVPTFFTILALFVIF).

Belongs to the PlsY family. In terms of assembly, probably interacts with PlsX.

The protein resides in the cell membrane. The enzyme catalyses an acyl phosphate + sn-glycerol 3-phosphate = a 1-acyl-sn-glycero-3-phosphate + phosphate. Its pathway is lipid metabolism; phospholipid metabolism. Its function is as follows. Catalyzes the transfer of an acyl group from acyl-phosphate (acyl-PO(4)) to glycerol-3-phosphate (G3P) to form lysophosphatidic acid (LPA). This enzyme utilizes acyl-phosphate as fatty acyl donor, but not acyl-CoA or acyl-ACP. This chain is Glycerol-3-phosphate acyltransferase, found in Exiguobacterium sibiricum (strain DSM 17290 / CCUG 55495 / CIP 109462 / JCM 13490 / 255-15).